Reading from the N-terminus, the 204-residue chain is Molybdenum cofactor guanylyltransferase (204 aa).

Residues 12-14, K25, N53, D71, and D101 contribute to the GTP site; that span reads LAG. D101 contributes to the Mg(2+) binding site.

Belongs to the MobA family. In terms of assembly, monomer. It depends on Mg(2+) as a cofactor.

It is found in the cytoplasm. The enzyme catalyses Mo-molybdopterin + GTP + H(+) = Mo-molybdopterin guanine dinucleotide + diphosphate. Its function is as follows. Transfers a GMP moiety from GTP to Mo-molybdopterin (Mo-MPT) cofactor (Moco or molybdenum cofactor) to form Mo-molybdopterin guanine dinucleotide (Mo-MGD) cofactor. The polypeptide is Molybdenum cofactor guanylyltransferase (Ralstonia nicotianae (strain ATCC BAA-1114 / GMI1000) (Ralstonia solanacearum)).